A 458-amino-acid chain; its full sequence is Chitin deacetylase 2 (458 aa).

The first 51 residues, Met-1–Ala-51, serve as a signal peptide directing secretion. N-linked (GlcNAc...) asparagine glycosylation is found at Asn-87, Asn-99, and Asn-125. In terms of domain architecture, NodB homology spans Met-158–Pro-348. Asp-165 acts as the Proton acceptor in catalysis. Residue Asp-165 participates in acetate binding. Position 166 (Asp-166) interacts with Co(2+). Asn-169 carries an N-linked (GlcNAc...) asparagine glycan. Residues His-215 and His-219 each coordinate Co(2+). Tyr-256 contributes to the acetate binding site. Asn-271 and Asn-309 each carry an N-linked (GlcNAc...) asparagine glycan. Catalysis depends on His-322, which acts as the Proton donor. N-linked (GlcNAc...) asparagine glycosylation is found at Asn-326, Asn-354, Asn-363, Asn-378, and Asn-393. The segment at Ser-382–Ala-430 is disordered. A lipid anchor (GPI-anchor amidated serine) is attached at Ser-427. Residues Ser-428–Leu-458 constitute a propeptide, removed in mature form. Asn-429 carries N-linked (GlcNAc...) asparagine glycosylation.

This sequence belongs to the polysaccharide deacetylase family. The cofactor is Co(2+). Post-translationally, glycosylated.

It is found in the secreted. The protein localises to the cell wall. Its subcellular location is the cell membrane. It carries out the reaction [(1-&gt;4)-N-acetyl-beta-D-glucosaminyl](n) + n H2O = chitosan + n acetate. Hydrolyzes the N-acetamido groups of N-acetyl-D-glucosamine residues in chitin to form chitosan and acetate. Chitosan is required to anchor melanin to the cell wall, for maintenance of cell wall integrity, and for cytokinesis. The polypeptide is Chitin deacetylase 2 (Cryptococcus neoformans var. neoformans serotype D (strain B-3501A) (Filobasidiella neoformans)).